Consider the following 68-residue polypeptide: conotoxin S11.3 (68 aa).

An N-terminal signal peptide occupies residues 1–26 (MMFRLTSVSCFLLVIVCLNLFQVVLT). 4 disulfides stabilise this stretch: C29–C43, C36–C48, C42–C52, and C47–C56. Y60 carries the post-translational modification Tyrosine amide. Positions 64-68 (ATFQE) are excised as a propeptide.

It belongs to the conotoxin I2 superfamily. In terms of tissue distribution, expressed by the venom duct.

It is found in the secreted. The polypeptide is conotoxin S11.3 (Conus striatus (Striated cone)).